The primary structure comprises 20 residues: Agglutinin beta-2 chain (20 aa).

A disordered region spans residues 1-20 (GRNGKSQSIIVGPWGDRVTN).

This sequence belongs to the jacalin lectin family. Formed of four alpha chains and four beta chains.

Its function is as follows. D-galactose-specific lectin, binds the T-antigen structure Gal-beta1,3-GalNAc. The sequence is that of Agglutinin beta-2 chain from Maclura pomifera (Osage orange).